The following is a 490-amino-acid chain: MSDRGRTLMVQGTTSDAGKSTLVTALCRWLARRGVAVAPFKPQNMALNSAVTADGGEIGRAQAVQAQACRLAPHTDMNPVLLKPNTDIGAQVIIHGRAVTSMDAAAYHDYKRVAMEAVLASHARLAAAYRVVMVEGAGSPAEINLRANDIANMGFAEAVDCPVILVADIDRGGVFAHLVGTLELLSDSERERVRGFVINRFRGDIALLQPGLDWLEARTGKPVLGVLPYVSDLHLEAEDAIDTRQAAKTGPRLKVVVPVLPRISNHTDFDPLRLHPQVELSFVGPGQALPPADLIVLPGSKSVRADLAALRERGWDEAILRHLRYGGRLLGICGGLQMLGERLHDPLGLEGAAGSSAGLGLLALETTLEADKQLRNVQGRLSLEDAPLSGYEIHAGVTRGEALARPAVVLDDGRADGARSVDGNVMGTYLHGLFESTAACSALLRWAGLREVRAVDYQALRERDIERLADLVERHLDTGRLLALCGEPHA.

The 188-residue stretch at 252–439 (RLKVVVPVLP…LHGLFESTAA (188 aa)) folds into the GATase cobBQ-type domain. The active-site Nucleophile is the Cys-333. The active site involves His-431.

This sequence belongs to the CobB/CobQ family. CobQ subfamily.

The protein operates within cofactor biosynthesis; adenosylcobalamin biosynthesis. Its function is as follows. Catalyzes amidations at positions B, D, E, and G on adenosylcobyrinic A,C-diamide. NH(2) groups are provided by glutamine, and one molecule of ATP is hydrogenolyzed for each amidation. The sequence is that of Cobyric acid synthase from Pseudomonas paraeruginosa (strain DSM 24068 / PA7) (Pseudomonas aeruginosa (strain PA7)).